A 268-amino-acid polypeptide reads, in one-letter code: Tryptophan synthase alpha chain (268 aa).

Catalysis depends on proton acceptor residues Glu49 and Asp60.

It belongs to the TrpA family. Tetramer of two alpha and two beta chains.

It carries out the reaction (1S,2R)-1-C-(indol-3-yl)glycerol 3-phosphate + L-serine = D-glyceraldehyde 3-phosphate + L-tryptophan + H2O. Its pathway is amino-acid biosynthesis; L-tryptophan biosynthesis; L-tryptophan from chorismate: step 5/5. The alpha subunit is responsible for the aldol cleavage of indoleglycerol phosphate to indole and glyceraldehyde 3-phosphate. In Escherichia fergusonii (strain ATCC 35469 / DSM 13698 / CCUG 18766 / IAM 14443 / JCM 21226 / LMG 7866 / NBRC 102419 / NCTC 12128 / CDC 0568-73), this protein is Tryptophan synthase alpha chain.